A 395-amino-acid polypeptide reads, in one-letter code: Thyroid hormone receptor beta (395 aa).

The interval 1–31 (MSEQADKCNSRWKDEAMQNGYIPSYLDKDEL) is modulating. The segment at residues 29-106 (DELCVVCGDK…VGMATDLVLD (78 aa)) is a DNA-binding region (nuclear receptor). The Zn(2+) site is built by C32, C35, C49, C52, C70, C76, C86, and C89. 2 NR C4-type zinc fingers span residues 32–52 (CVVC…CEGC) and 70–89 (CKYE…CQEC). One can recognise an NR LBD domain in the interval 142–395 (EEWEMIRVVT…PPLFLEVFED (254 aa)). The 3,3',5-triiodo-L-thyronine site is built by R216, N265, and H369.

This sequence belongs to the nuclear hormone receptor family. NR1 subfamily. As to quaternary structure, interacts (via the ligand-binding domain) with ncoa2. In terms of tissue distribution, widely expressed in a range of adult tissues including the brain, eye, fin, gill, intestine, liver, swim bladder and ovary. In the eye, expressed in the outer nuclear layer of the retina.

The protein localises to the nucleus. Functionally, nuclear hormone receptor that can act as a repressor or activator of transcription. High affinity receptor for the thyroid gland hormone triiodothyronine (T3). Transactivating activity is ligand-dependent, and is repressed in the absence of T3. This chain is Thyroid hormone receptor beta (thrb), found in Danio rerio (Zebrafish).